Here is a 540-residue protein sequence, read N- to C-terminus: Bifunctional purine biosynthesis protein PurH (540 aa).

The region spanning 1-144 (MKRALISVYD…KNYQDVGVVV (144 aa)) is the MGS-like domain. The segment at 204 to 224 (ETAPERPIGADPGPQKPAAPS) is disordered.

This sequence belongs to the PurH family.

The enzyme catalyses (6R)-10-formyltetrahydrofolate + 5-amino-1-(5-phospho-beta-D-ribosyl)imidazole-4-carboxamide = 5-formamido-1-(5-phospho-D-ribosyl)imidazole-4-carboxamide + (6S)-5,6,7,8-tetrahydrofolate. It catalyses the reaction IMP + H2O = 5-formamido-1-(5-phospho-D-ribosyl)imidazole-4-carboxamide. It functions in the pathway purine metabolism; IMP biosynthesis via de novo pathway; 5-formamido-1-(5-phospho-D-ribosyl)imidazole-4-carboxamide from 5-amino-1-(5-phospho-D-ribosyl)imidazole-4-carboxamide (10-formyl THF route): step 1/1. The protein operates within purine metabolism; IMP biosynthesis via de novo pathway; IMP from 5-formamido-1-(5-phospho-D-ribosyl)imidazole-4-carboxamide: step 1/1. In Symbiobacterium thermophilum (strain DSM 24528 / JCM 14929 / IAM 14863 / T), this protein is Bifunctional purine biosynthesis protein PurH.